We begin with the raw amino-acid sequence, 886 residues long: DNA mismatch repair protein MutS (886 aa).

641 to 648 (GPNMAGKS) serves as a coordination point for ATP.

Belongs to the DNA mismatch repair MutS family.

In terms of biological role, this protein is involved in the repair of mismatches in DNA. It is possible that it carries out the mismatch recognition step. This protein has a weak ATPase activity. The protein is DNA mismatch repair protein MutS of Rickettsia rickettsii (strain Sheila Smith).